Here is a 157-residue protein sequence, read N- to C-terminus: UPF0212 protein rrnAC1165 (157 aa).

The tract at residues 105 to 157 (VLEIEEIPEESDETTEDESSSAESEADADDPPSDQSADESDDVLPEFEELIDE) is disordered. Residues 106-157 (LEIEEIPEESDETTEDESSSAESEADADDPPSDQSADESDDVLPEFEELIDE) show a composition bias toward acidic residues.

The protein belongs to the UPF0212 family.

This Haloarcula marismortui (strain ATCC 43049 / DSM 3752 / JCM 8966 / VKM B-1809) (Halobacterium marismortui) protein is UPF0212 protein rrnAC1165.